The following is a 452-amino-acid chain: Transcription factor SMP1 (452 aa).

In terms of domain architecture, MADS-box spans 3–57 (RRKIEIEPIKDDRNRTVTFIKRKAGLFKKAHELSVLCQVDIAVIILGSNNTFYEY). The segment at residues 58–87 (SSVDMSNLLNVHQNNTDLPHNIIEPSDYGD) is a DNA-binding region (mef2-type). Residues 97–142 (NERKRRRRRATVLQPASHSGSCTVSSQDSSSVQNNGNLSAPLASND) are disordered. Low complexity predominate over residues 115–127 (SGSCTVSSQDSSS).

This sequence belongs to the MEF2 family. As to quaternary structure, can heterodimerize with RLM1. Interacts with HOG1. Post-translationally, phosphorylated by HOG1.

Its subcellular location is the nucleus. In terms of biological role, transcription factor that controls part of the HOG1-mediated osmostress responses. Binds to the DNA sequence 5'-ACTACTA[TA](4)TAG-3'. Does not appear to function in the MPK1 pathway. This chain is Transcription factor SMP1 (SMP1), found in Saccharomyces cerevisiae (strain ATCC 204508 / S288c) (Baker's yeast).